The primary structure comprises 457 residues: MIIYNTLTRSKELFVPLDVNNVKIYVCGPTVYDFAHIGNSRSIVIYDILFRLLNVLYPKVTYIRNITDIDDKIINVAQNNNQNIYDVTARYIKAFNEDMGRLNCLKPTYEPRATENIDVMLALIEKLINYGHAYIRDNTVFFDIQSYPAYGKLSGRNIMELIYGSRIDIEVGKKHPGDFVLWKPATDIDSKLMSCWPSPWGVGRPGWHIECSAMSYNYLGENFDIHGGGADLQFPHHENELAQSCCAFPNSYYAKYWIHNGFLTVNHEKMSKSLGNFLTVRQLLDSGIRGEVIRYIFLSTHYRKPLDWNDNVVSSAQESLNRIYMALNVTDERLLLDDVEVSDEIISCLKDDMNTPKAIAVLHEMVTRINKASDIDKKVYFIKVLIKSANFLGILHHSWQEWFKVDNDQDIIQLIHERKMAKTNGDFIKADRIRQILLDKGIVLSDNKDGTTLWYRS.

Residue Cys27 coordinates Zn(2+). The short motif at Pro29–Asn39 is the 'HIGH' region element. The Zn(2+) site is built by Cys211, His236, and Glu240. Positions Lys269–Ser273 match the 'KMSKS' region motif. Lys272 contributes to the ATP binding site.

It belongs to the class-I aminoacyl-tRNA synthetase family. In terms of assembly, monomer. Requires Zn(2+) as cofactor.

It localises to the cytoplasm. It catalyses the reaction tRNA(Cys) + L-cysteine + ATP = L-cysteinyl-tRNA(Cys) + AMP + diphosphate. This is Cysteine--tRNA ligase from Ehrlichia ruminantium (strain Gardel).